We begin with the raw amino-acid sequence, 296 residues long: Lipoyl synthase (296 aa).

[4Fe-4S] cluster is bound by residues cysteine 37, cysteine 42, cysteine 48, cysteine 63, cysteine 67, cysteine 70, and serine 276. Residues 49-265 enclose the Radical SAM core domain; the sequence is WSKKHTTVMI…ERLAKTKGFL (217 aa).

Belongs to the radical SAM superfamily. Lipoyl synthase family. [4Fe-4S] cluster is required as a cofactor.

The protein resides in the cytoplasm. It carries out the reaction [[Fe-S] cluster scaffold protein carrying a second [4Fe-4S](2+) cluster] + N(6)-octanoyl-L-lysyl-[protein] + 2 oxidized [2Fe-2S]-[ferredoxin] + 2 S-adenosyl-L-methionine + 4 H(+) = [[Fe-S] cluster scaffold protein] + N(6)-[(R)-dihydrolipoyl]-L-lysyl-[protein] + 4 Fe(3+) + 2 hydrogen sulfide + 2 5'-deoxyadenosine + 2 L-methionine + 2 reduced [2Fe-2S]-[ferredoxin]. It participates in protein modification; protein lipoylation via endogenous pathway; protein N(6)-(lipoyl)lysine from octanoyl-[acyl-carrier-protein]: step 2/2. Catalyzes the radical-mediated insertion of two sulfur atoms into the C-6 and C-8 positions of the octanoyl moiety bound to the lipoyl domains of lipoate-dependent enzymes, thereby converting the octanoylated domains into lipoylated derivatives. The sequence is that of Lipoyl synthase from Rickettsia rickettsii (strain Iowa).